The following is a 411-amino-acid chain: NADH-quinone oxidoreductase subunit D (411 aa).

It belongs to the complex I 49 kDa subunit family. NDH-1 is composed of 14 different subunits. Subunits NuoB, C, D, E, F, and G constitute the peripheral sector of the complex.

The protein localises to the cell inner membrane. The enzyme catalyses a quinone + NADH + 5 H(+)(in) = a quinol + NAD(+) + 4 H(+)(out). In terms of biological role, NDH-1 shuttles electrons from NADH, via FMN and iron-sulfur (Fe-S) centers, to quinones in the respiratory chain. The immediate electron acceptor for the enzyme in this species is believed to be ubiquinone. Couples the redox reaction to proton translocation (for every two electrons transferred, four hydrogen ions are translocated across the cytoplasmic membrane), and thus conserves the redox energy in a proton gradient. The polypeptide is NADH-quinone oxidoreductase subunit D (Phenylobacterium zucineum (strain HLK1)).